Here is a 122-residue protein sequence, read N- to C-terminus: Large ribosomal subunit protein uL14 (122 aa).

It belongs to the universal ribosomal protein uL14 family. Part of the 50S ribosomal subunit. Forms a cluster with proteins L3 and L19. In the 70S ribosome, L14 and L19 interact and together make contacts with the 16S rRNA in bridges B5 and B8.

In terms of biological role, binds to 23S rRNA. Forms part of two intersubunit bridges in the 70S ribosome. The chain is Large ribosomal subunit protein uL14 from Geobacter sulfurreducens (strain ATCC 51573 / DSM 12127 / PCA).